A 907-amino-acid chain; its full sequence is MTAVHAGNINFKWDPKSLEIRTLAVERLLEPLVTQVTTLVNTNSKGPSNKKRGRSKKAHVLAASVEQATENFLDKGDKIAKESQFLKEELVAAVEDVRKQGDLMKSAAGEFADDPCSSVKRGNMVRAARALLSAVTRLLILADMADVYKLLVQLKVVEDGILKLRNAGNEQDLGIQYKALKPEVDKLNIMAAKRQQELKDVGHRDQMAAARGILQKNVPILYTASQACLQHPDVAAYKANRDLIYKQLQQAVNGISNAAQATTSDDASQHPGGSGGGELAYALNDFDKQIIVDPLSFSEERFRPSLEERLESIISGAALMADSSCTRDDRRERIVAECNAVRQALQDLLSEYMGNAGRKERSDALNSAIDKMTKKTRDLRRQLRKAVMDHVSDSFLETNVPLLVLIEAAKNGNEKEVKEYAQVFREHANKLIEVANLACSISNNEEGVKLVRMSASQLEALCPQVINAALALAAKPQSKLAQENMDLFKEQWEKQVRVLTDAVDDITSIDDFLAVSENHILEDVNKCVIALQEKDVDGLDRTAGAIRGRAARVIHVVTSEMDNYEPGVYTEKVLEATKLLSNTVMPRFTEQVEAAVEALSSDPAQPMDENEFIDASRLVYDGIRDIRKAVLMIRTPEELDDSDFETEDFDVRSRTSVQTEDDQLIAGQSARAIMAQLPQEQKAKIAEQVASFQEEKSKLDAEVSKWDDSGNDIIVLAKQMCMIMMEMTDFTRGKGPLKNTSDVISAAKKIAEAGSRMDKLGRTIADHCPDSACKQDLLAYLQRIALYCHQLNICSKVKAEVQNLGGELVVSGVDSAMSLIQAAKNLMNAVVQTVKASYVASTKYQKSQGMASLNLPAVSWKMKAPEKKPLVKREKQDETQTKIKRASQKKHVNPVQALSEFKAMDSI.

Thr2 is modified (N-acetylthreonine). Residues 2–228 form an involved in homodimerization region; it reads TAVHAGNINF…PILYTASQAC (227 aa). Lys57 is covalently cross-linked (Glycyl lysine isopeptide (Lys-Gly) (interchain with G-Cter in SUMO2)). The interaction with JUP and CTNNB1 stretch occupies residues 97–148; the sequence is VRKQGDLMKSAAGEFADDPCSSVKRGNMVRAARALLSAVTRLLILADMADVY. Ser264, Ser268, Ser296, and Ser298 each carry phosphoserine. Positions 326–395 are interaction with alpha-actinin; that stretch reads TRDDRRERIV…AVMDHVSDSF (70 aa). Phosphothreonine is present on Thr635. Position 642 is a phosphoserine (Ser642). Thr646 bears the Phosphothreonine mark. Phosphoserine occurs at positions 653 and 656. A Phosphothreonine modification is found at Thr659. Lys798 is covalently cross-linked (Glycyl lysine isopeptide (Lys-Gly) (interchain with G-Cter in SUMO2)). Ser852 carries the post-translational modification Phosphoserine. Residues 865–881 show a composition bias toward basic and acidic residues; it reads PEKKPLVKREKQDETQT. The disordered stretch occupies residues 865 to 895; sequence PEKKPLVKREKQDETQTKIKRASQKKHVNPV. Basic residues predominate over residues 882-892; it reads KIKRASQKKHV.

Belongs to the vinculin/alpha-catenin family. In terms of assembly, monomer and homodimer; the monomer preferentially binds to CTNNB1 and the homodimer to actin. Component of an cadherin:catenin adhesion complex composed of at least of CDH26, beta-catenin/CTNNB1, alpha-catenin/CTNNA1 and p120 catenin/CTNND1. Possible component of an E-cadherin/ catenin adhesion complex together with E-cadherin/CDH1 and beta-catenin/CTNNB1 or gamma-catenin/JUP; the complex is located to adherens junctions. The stable association of CTNNA1 is controversial as CTNNA1 was shown not to bind to F-actin when assembled in the complex. Alternatively, the CTNNA1-containing complex may be linked to F-actin by other proteins such as LIMA1. Binds AFDN and F-actin. Interacts with ARHGAP21. Interacts with AJUBA. Interacts with LIMA1. Interacts with vinculin/VCL. Interacts with TJP2/ZO2 (via N-terminus). Interacts with TJP1/ZO1 (via N-terminus). Sumoylated. Post-translationally, phosphorylation seems to contribute to the strength of cell-cell adhesion rather than to the basic capacity for cell-cell adhesion.

Its subcellular location is the cytoplasm. It localises to the cytoskeleton. The protein resides in the cell junction. It is found in the adherens junction. The protein localises to the cell membrane. Its subcellular location is the nucleus. Its function is as follows. Associates with the cytoplasmic domain of a variety of cadherins. The association of catenins to cadherins produces a complex which is linked to the actin filament network, and which seems to be of primary importance for cadherins cell-adhesion properties. Can associate with both E- and N-cadherins. Originally believed to be a stable component of E-cadherin/catenin adhesion complexes and to mediate the linkage of cadherins to the actin cytoskeleton at adherens junctions. In contrast, cortical actin was found to be much more dynamic than E-cadherin/catenin complexes and CTNNA1 was shown not to bind to F-actin when assembled in the complex suggesting a different linkage between actin and adherens junctions components. The homodimeric form may regulate actin filament assembly and inhibit actin branching by competing with the Arp2/3 complex for binding to actin filaments. Involved in the regulation of WWTR1/TAZ, YAP1 and TGFB1-dependent SMAD2 and SMAD3 nuclear accumulation. May play a crucial role in cell differentiation. The protein is Catenin alpha-1 of Oryctolagus cuniculus (Rabbit).